The sequence spans 165 residues: uncharacterized protein (165 aa).

The next 2 membrane-spanning stretches (helical) occupy residues 7–27 (LWLALVLLILSIPAVSAQITV) and 141–161 (KGTPGFEAFVAVAVIGSIALL).

It localises to the cell membrane. This is an uncharacterized protein from Archaeoglobus fulgidus (strain ATCC 49558 / DSM 4304 / JCM 9628 / NBRC 100126 / VC-16).